We begin with the raw amino-acid sequence, 1134 residues long: MMS19 nucleotide excision repair protein homolog (1134 aa).

HEAT repeat units lie at residues 959-998, 1002-1047, 1050-1089, and 1092-1130; these read QRCF…NVPV, LDNT…KGQQ, SDNA…LPHR, and YPFR…ITSG.

This sequence belongs to the MET18/MMS19 family. As to quaternary structure, part of a complex composed of AE7, CIA1, MMS19 and NAR1. Interacts with AE7.

The protein resides in the nucleus. Its subcellular location is the cytoplasm. Its function is as follows. May select specific target apoproteins to which a Fe-S cluster produced by the cytosolic iron-sulfur (Fe-S) protein assembly (CIA) pathway is transferred. This chain is MMS19 nucleotide excision repair protein homolog, found in Arabidopsis thaliana (Mouse-ear cress).